A 576-amino-acid polypeptide reads, in one-letter code: Nuclear receptor subfamily 1 group D member 2 (576 aa).

Residues 1-60 (MELNAGGVIAYISSSSSASSPASCHSEGSENSFQSSSSSVPSSPNSSNCDANGNPKNADI) are required for phosphorylation by CSNK1E and cytoplasmic localization. The segment at 1 to 99 (MELNAGGVIA…HSGMTKFSGM (99 aa)) is modulating. Low complexity predominate over residues 13-47 (SSSSSASSPASCHSEGSENSFQSSSSSVPSSPNSS). Residues 13–90 (SSSSSASSPA…TSAPGMTKSH (78 aa)) form a disordered region. Serine 46 is subject to Phosphoserine; by GSK3-beta. A DNA-binding region (nuclear receptor) is located at residues 100–176 (VLLCKVCGDV…VGMSRDAVRF (77 aa)). 2 NR C4-type zinc fingers span residues 103–123 (CKVC…CEGC) and 140–164 (CLKN…FKKC). An N6-acetyllysine; by KAT5 mark is found at lysine 162 and lysine 163. 2 disordered regions span residues 215-246 (QHDQ…SDFA) and 263-282 (LYNQ…QRGE). Composition is skewed to basic and acidic residues over residues 227–237 (LRPKSQLEQEN) and 263–272 (LYNQEHRENS). Cystine bridges form between cysteine 334–cysteine 340 and cysteine 371–cysteine 381. In terms of domain architecture, NR LBD spans 366–576 (RNSYLCNTGG…EELLAFKVHP (211 aa)). Cysteine 381 and histidine 565 together coordinate heme. Residues 394–576 (SGHEIWEEFS…EELLAFKVHP (183 aa)) form an interaction with ZNHIT1 region.

Belongs to the nuclear hormone receptor family. NR1 subfamily. As to quaternary structure, binds DNA as a monomer or a homodimer. Interacts with NCOA5 coactivator, leading to a strong increase of transcription of target genes. Interacts (via N-terminus) with KAT5. Interacts (via C-terminus) with HDAC1. Interacts with ZNHIT1. Interacts with SIAH2. Post-translationally, deacetylated by HDAC1. Acetylation and deacetylation regulate its transcriptional regulatory activity. Under more reducing intracellular redox conditions, Cys-381 is in its heme-bound state, which is optimal for recruitment of the NCOR1/HDAC3 corepressor complex and repression of target genes. When subjected to oxidative stress conditions, Cys-381 undergoes oxidation to form a disulfide bridge with Cys-371, also triggering a ligand switch that results in release of bound heme and derepression of target genes. In terms of processing, ubiquitinated by SIAH2; leading to its proteasomal degradation. Post-translationally, phosphorylated by CSNK1E; phosphorylation enhances its cytoplasmic localization. As to expression, ubiquitous. Expressed abundantly in skeletal muscle and brown adipose tissue. Expressed during skeletal muscle myogenesis.

The protein resides in the nucleus. It is found in the cytoplasm. The heme-bound form can bind gaseous signaling molecules such as CO and nitric oxide (NO) and NO can reverse its transcriptional repressor activity. In terms of biological role, transcriptional repressor which coordinates circadian rhythm and metabolic pathways in a heme-dependent manner. Integral component of the complex transcription machinery that governs circadian rhythmicity and forms a critical negative limb of the circadian clock by directly repressing the expression of core clock components BMAL1 and CLOCK. Also regulates genes involved in metabolic functions, including lipid metabolism and the inflammatory response. Acts as a receptor for heme which stimulates its interaction with the NCOR1/HDAC3 corepressor complex, enhancing transcriptional repression. Recognizes two classes of DNA response elements within the promoter of its target genes and can bind to DNA as either monomers or homodimers, depending on the nature of the response element. Binds as a monomer to a response element composed of the consensus half-site motif 5'-[A/G]GGTCA-3' preceded by an A/T-rich 5' sequence (RevRE), or as a homodimer to a direct repeat of the core motif spaced by two nuclegotides (RevDR-2). Acts as a potent competitive repressor of ROR alpha (RORA) function and also negatively regulates the expression of NR1D1. Regulates lipid and energy homeostasis in the skeletal muscle via repression of genes involved in lipid metabolism and myogenesis including: CD36, FABP3, FABP4, UCP3, SCD1 and MSTN. Regulates hepatic lipid metabolism via the repression of APOC3. Represses gene expression at a distance in macrophages by inhibiting the transcription of enhancer-derived RNAs (eRNAs). In addition to its activity as a repressor, can also act as a transcriptional activator. Acts as a transcriptional activator of the sterol regulatory element-binding protein 1 (SREBF1) and the inflammatory mediator interleukin-6 (IL6) in the skeletal muscle. Plays a role in the regulation of circadian sleep/wake cycle; essential for maintaining wakefulness during the dark phase or active period. Key regulator of skeletal muscle mitochondrial function; negatively regulates the skeletal muscle expression of core clock genes and genes involved in mitochondrial biogenesis, fatty acid beta-oxidation and lipid metabolism. May play a role in the circadian control of neutrophilic inflammation in the lung. The protein is Nuclear receptor subfamily 1 group D member 2 of Mus musculus (Mouse).